The sequence spans 101 residues: Ubiquitin-related modifier 1 homolog (101 aa).

At Gly-101 the chain carries 1-thioglycine. Residue Gly-101 forms a Glycyl lysine isopeptide (Gly-Lys) (interchain with K-? in acceptor proteins) linkage.

It belongs to the URM1 family. In terms of assembly, interacts with cer. Post-translationally, C-terminal thiocarboxylation occurs in 2 steps, it is first acyl-adenylated (-COAMP) via the hesA/moeB/thiF part of the MOCS3 homolog, then thiocarboxylated (-COSH) via the rhodanese domain of the MOCS3 homolog.

It localises to the cytoplasm. The protein operates within tRNA modification; 5-methoxycarbonylmethyl-2-thiouridine-tRNA biosynthesis. In terms of biological role, acts as a sulfur carrier required for 2-thiolation of mcm(5)S(2)U at tRNA wobble positions of cytosolic tRNA(Lys), tRNA(Glu) and tRNA(Gln). Serves as sulfur donor in tRNA 2-thiolation reaction by being thiocarboxylated (-COSH) at its C-terminus by MOCS3. The sulfur is then transferred to tRNA to form 2-thiolation of mcm(5)S(2)U. Also acts as a ubiquitin-like protein (UBL) that is covalently conjugated via an isopeptide bond to lysine residues of target proteins such as Prx2/Jafrac1, Ciao1, Eip71CD and GILT1. The thiocarboxylated form serves as substrate for conjugation and oxidative stress specifically induces the formation of UBL-protein conjugates. The sequence is that of Ubiquitin-related modifier 1 homolog from Drosophila yakuba (Fruit fly).